The following is a 461-amino-acid chain: Cysteine--tRNA ligase (461 aa).

Residue C28 coordinates Zn(2+). Residues 30 to 40 (VTIYDLCHIGH) carry the 'HIGH' region motif. Zn(2+)-binding residues include C209, H234, and E238. The 'KMSKS' region motif lies at 266-270 (KMSKS). Residue K269 participates in ATP binding.

The protein belongs to the class-I aminoacyl-tRNA synthetase family. As to quaternary structure, monomer. It depends on Zn(2+) as a cofactor.

It is found in the cytoplasm. The catalysed reaction is tRNA(Cys) + L-cysteine + ATP = L-cysteinyl-tRNA(Cys) + AMP + diphosphate. This chain is Cysteine--tRNA ligase, found in Edwardsiella ictaluri (strain 93-146).